The sequence spans 335 residues: Beta-hexosaminidase (335 aa).

Residues Asp-60, Arg-68, Arg-133, and 163-164 contribute to the substrate site; that span reads KH. His-176 functions as the Proton donor/acceptor in the catalytic mechanism. Asp-247 acts as the Nucleophile in catalysis.

This sequence belongs to the glycosyl hydrolase 3 family. NagZ subfamily.

The protein localises to the cytoplasm. It carries out the reaction Hydrolysis of terminal non-reducing N-acetyl-D-hexosamine residues in N-acetyl-beta-D-hexosaminides.. Its pathway is cell wall biogenesis; peptidoglycan recycling. Plays a role in peptidoglycan recycling by cleaving the terminal beta-1,4-linked N-acetylglucosamine (GlcNAc) from peptide-linked peptidoglycan fragments, giving rise to free GlcNAc, anhydro-N-acetylmuramic acid and anhydro-N-acetylmuramic acid-linked peptides. The protein is Beta-hexosaminidase of Stenotrophomonas maltophilia (strain K279a).